A 254-amino-acid polypeptide reads, in one-letter code: 5-oxoprolinase subunit A (254 aa).

This sequence belongs to the LamB/PxpA family. In terms of assembly, forms a complex composed of PxpA, PxpB and PxpC.

It carries out the reaction 5-oxo-L-proline + ATP + 2 H2O = L-glutamate + ADP + phosphate + H(+). Functionally, catalyzes the cleavage of 5-oxoproline to form L-glutamate coupled to the hydrolysis of ATP to ADP and inorganic phosphate. This Rhodopseudomonas palustris (strain ATCC BAA-98 / CGA009) protein is 5-oxoprolinase subunit A.